Here is a 287-residue protein sequence, read N- to C-terminus: Large ribosomal subunit protein uL2 (287 aa).

Disordered stretches follow at residues 25-57 (TKTEPEKSLTTSKHRAKGRNNTGRITSRRRGGG) and 203-287 (LSAG…GRES). 2 stretches are compositionally biased toward basic residues: residues 209–220 (GRNRWKGRRPKV) and 259–287 (TRNRKKLSSKFIVRRRRKSSKRGRGGRES).

Belongs to the universal ribosomal protein uL2 family. In terms of assembly, part of the 50S ribosomal subunit. Forms a bridge to the 30S subunit in the 70S ribosome.

In terms of biological role, one of the primary rRNA binding proteins. Required for association of the 30S and 50S subunits to form the 70S ribosome, for tRNA binding and peptide bond formation. It has been suggested to have peptidyltransferase activity; this is somewhat controversial. Makes several contacts with the 16S rRNA in the 70S ribosome. This Nostoc punctiforme (strain ATCC 29133 / PCC 73102) protein is Large ribosomal subunit protein uL2.